Here is a 220-residue protein sequence, read N- to C-terminus: Probable 26S proteasome regulatory subunit p27 (220 aa).

The PDZ domain occupies 119–196; it reads ARRNNDDQAI…PVLLLREGQI (78 aa).

It belongs to the proteasome subunit p27 family. In terms of assembly, part of a transient complex containing NAS2, RPT4 and RPT5 formed during the assembly of the 26S proteasome.

Functionally, acts as a chaperone during the assembly of the 26S proteasome, specifically of the base subcomplex of the 19S regulatory complex (RC). During the base subcomplex assembly is part of a NAS2:RPT4:RPT5 module; NAS2 is released during the further base assembly process. The chain is Probable 26S proteasome regulatory subunit p27 (NAS2) from Saccharomyces cerevisiae (strain ATCC 204508 / S288c) (Baker's yeast).